The primary structure comprises 336 residues: Speedy protein E1 (336 aa).

The disordered stretch occupies residues 16 to 50 (GVDPSPPCRSLGWKRKREWSDESEEEPEKELAPEP). Residues 36–50 (DESEEEPEKELAPEP) are compositionally biased toward acidic residues.

The protein belongs to the Speedy/Ringo family. As to expression, predominantly expressed in testis and heart.

In Homo sapiens (Human), this protein is Speedy protein E1.